The following is a 633-amino-acid chain: uncharacterized protein (633 aa).

The segment at 12–43 is disordered; the sequence is ESGTNNYSDTIANGNTLPPRSKKGHSGRRKRS. The span at 13–29 shows a compositional bias: polar residues; it reads SGTNNYSDTIANGNTLP. Residues 31 to 42 are compositionally biased toward basic residues; the sequence is RSKKGHSGRRKR. 2 helical membrane passes run 99 to 118 and 217 to 233; these read ILFG…SSAL and NCAF…ITAC. The disordered stretch occupies residues 593 to 612; sequence DAETNKATGSAKSENIETKS.

It localises to the membrane. This is an uncharacterized protein from Saccharomyces cerevisiae (strain ATCC 204508 / S288c) (Baker's yeast).